Consider the following 334-residue polypeptide: tRNA uridine(34) hydroxylase (334 aa).

The Rhodanese domain occupies 123 to 217 (SDPDVILVDT…YLEEVKAEES (95 aa)). The active-site Cysteine persulfide intermediate is Cys177.

Belongs to the TrhO family.

The enzyme catalyses uridine(34) in tRNA + AH2 + O2 = 5-hydroxyuridine(34) in tRNA + A + H2O. Its function is as follows. Catalyzes oxygen-dependent 5-hydroxyuridine (ho5U) modification at position 34 in tRNAs. This Shewanella baltica (strain OS223) protein is tRNA uridine(34) hydroxylase.